The chain runs to 362 residues: GTP 3',8-cyclase (362 aa).

The region spanning 8 to 228 (SLGRPLRDLR…ARISSHWPID (221 aa)) is the Radical SAM core domain. Residue R17 participates in GTP binding. [4Fe-4S] cluster is bound by residues C24 and C28. Y30 is an S-adenosyl-L-methionine binding site. C31 is a binding site for [4Fe-4S] cluster. R71 is a binding site for GTP. G75 lines the S-adenosyl-L-methionine pocket. T102 is a GTP binding site. An S-adenosyl-L-methionine-binding site is contributed by S126. Residue K164 coordinates GTP. S-adenosyl-L-methionine is bound at residue M198. Residues C262 and C265 each contribute to the [4Fe-4S] cluster site. 267–269 (RLR) contacts GTP. C279 is a [4Fe-4S] cluster binding site. Residues 325-362 (ALDSDGSREDADESEASAVPGRSTHPGHRKVEMSYIGG) are disordered.

The protein belongs to the radical SAM superfamily. MoaA family. In terms of assembly, monomer and homodimer. [4Fe-4S] cluster serves as cofactor.

It carries out the reaction GTP + AH2 + S-adenosyl-L-methionine = (8S)-3',8-cyclo-7,8-dihydroguanosine 5'-triphosphate + 5'-deoxyadenosine + L-methionine + A + H(+). It functions in the pathway cofactor biosynthesis; molybdopterin biosynthesis. Its function is as follows. Catalyzes the cyclization of GTP to (8S)-3',8-cyclo-7,8-dihydroguanosine 5'-triphosphate. This is GTP 3',8-cyclase from Acidothermus cellulolyticus (strain ATCC 43068 / DSM 8971 / 11B).